We begin with the raw amino-acid sequence, 261 residues long: Thioesterase frbD (261 aa).

It belongs to the AMT4 thioesterase family.

It functions in the pathway antifungal biosynthesis. Thioesterase; part of the gene cluster that mediates the biosynthesis of the antifungal antibiotic FR901469, an inhibitor of beta-1,3-glucansynthase, exerting antifungal activity against the pathogenes Candida albicans and Aspergillus fumigatus. FR901469 is a cyclic depsipeptide containing 12 amino acid residues and a fatty acid chain. The NRPS frbI contains 12 modules responsible for the formation of the depsipeptide backbone which is denoted as Acyl-Thr-Ala-Tyr-Val-4OHPro-Thr-Thr-3OHPro-threo3OHGln-Gly-Thr-Orn-OH (C71H116N14O23). The PKS frbB is probably involved in the production of the hydrocarbon chain, and the acyl-CoA ligase frbC might be involved in the transport of the chain to the peptide ptoduct of frbI. Because FR901469 contains 3 hydroxylated amino acid residues, the 3 oxygenases frbA, frbH, and frbJ might be participating in amino acid hydroxylation. As no thioesterase domains were detected in frbI or frbB, the thioesterases frbD and frbE may instead release and cyclize the products of the NRPS and PKS, respectively. The polypeptide is Thioesterase frbD (Dothideomycetidae sp. (strain 11243) (Fungal sp. (strain No.11243))).